Reading from the N-terminus, the 374-residue chain is Pectate lyase 1 (374 aa).

An N-terminal signal peptide occupies residues 1–21 (MDSPCLVALLVFSFVIGSCFS). 2 cysteine pairs are disulfide-bonded: Cys28-Cys45 and Cys128-Cys147. N-linked (GlcNAc...) asparagine glycosylation is present at Asn158. Asp170 lines the Ca(2+) pocket. The N-linked (GlcNAc...) (complex) asparagine glycan is linked to Asn191. Positions 194 and 198 each coordinate Ca(2+). Residue Arg250 is part of the active site. Residue Asn293 is glycosylated (N-linked (GlcNAc...) asparagine). Cys306 and Cys312 are disulfide-bonded. N-linked (GlcNAc...) (complex) asparagine glycosylation is present at Asn354.

The protein belongs to the polysaccharide lyase 1 family. Amb a subfamily. The cofactor is Ca(2+). In terms of processing, N-glycosylated; contains fucose and xylose.

It carries out the reaction Eliminative cleavage of (1-&gt;4)-alpha-D-galacturonan to give oligosaccharides with 4-deoxy-alpha-D-galact-4-enuronosyl groups at their non-reducing ends.. The protein operates within glycan metabolism; pectin degradation; 2-dehydro-3-deoxy-D-gluconate from pectin: step 2/5. Its function is as follows. Has pectate lyase activity. The protein is Pectate lyase 1 of Cryptomeria japonica (Japanese cedar).